We begin with the raw amino-acid sequence, 476 residues long: Cyclase-associated protein 1 (476 aa).

Disordered stretches follow at residues 224–262 and 277–319; these read KPASAPAKGPPGAPAPPPAPLFSAESSKPSSSSNQKQGM and GLRK…PPKM. Pro residues predominate over residues 231-243; that stretch reads KGPPGAPAPPPAP. The segment covering 246-256 has biased composition (low complexity); that stretch reads SAESSKPSSSS. Over residues 280-293 the composition is skewed to basic and acidic residues; sequence KVTDDMKTKNRADR. A C-CAP/cofactor C-like domain is found at 316–453; it reads PPKMELQMGR…PDGDWVEHAL (138 aa).

The protein belongs to the CAP family. In terms of tissue distribution, expressed in roots, cotyledons, leaves, stems, flowers, pollen and shoots. Not detected in siliques.

Functionally, actin monomer binding protein that accelerates the exchange of ADP for ATP. Regulates the pool of unpolymerized ATP-actin. Key intermediate between actin-depolymerizing factor (ADF)-mediated disassembly and the profilin-based nucleation and elongation machinery. This is Cyclase-associated protein 1 (CAP1) from Arabidopsis thaliana (Mouse-ear cress).